Reading from the N-terminus, the 225-residue chain is Tryptophan synthase beta chain (225 aa).

This sequence belongs to the TrpB family. Tetramer of two alpha and two beta chains. It depends on pyridoxal 5'-phosphate as a cofactor.

It carries out the reaction (1S,2R)-1-C-(indol-3-yl)glycerol 3-phosphate + L-serine = D-glyceraldehyde 3-phosphate + L-tryptophan + H2O. It functions in the pathway amino-acid biosynthesis; L-tryptophan biosynthesis; L-tryptophan from chorismate: step 5/5. In terms of biological role, the beta subunit is responsible for the synthesis of L-tryptophan from indole and L-serine. The chain is Tryptophan synthase beta chain (trpB) from Buchnera aphidicola subsp. Rhopalosiphum padi.